A 66-amino-acid chain; its full sequence is Large ribosomal subunit protein eL24 (66 aa).

Positions 7, 10, 33, and 37 each coordinate Zn(2+). The segment at 7-37 adopts a C4-type zinc-finger fold; that stretch reads CSYCGKPFEPGTGKMYVRNDGRVLFFCSRKC.

The protein belongs to the eukaryotic ribosomal protein eL24 family. Part of the 50S ribosomal subunit. Forms a cluster with proteins L3 and L14. It depends on Zn(2+) as a cofactor.

Its function is as follows. Binds to the 23S rRNA. This Pyrococcus furiosus (strain ATCC 43587 / DSM 3638 / JCM 8422 / Vc1) protein is Large ribosomal subunit protein eL24.